The sequence spans 91 residues: Probable Fe(2+)-trafficking protein (91 aa).

Belongs to the Fe(2+)-trafficking protein family. Monomer.

In terms of biological role, could be a mediator in iron transactions between iron acquisition and iron-requiring processes, such as synthesis and/or repair of Fe-S clusters in biosynthetic enzymes. The chain is Probable Fe(2+)-trafficking protein from Cronobacter sakazakii (strain ATCC BAA-894) (Enterobacter sakazakii).